The sequence spans 154 residues: MECPNCHKNASRVIDSRPSDENRAIRRRRECENCGFRFTTFERVERSPLLVVKNDGTREAFNRDKILHGVMMAAQKRPISSEQLDALVDHVENEIRKQGLNEISSKDIGNLVMKELANLDDVAYIRFASIYRQFKDVSGFMEAMEDMMAKHDKE.

Residues 1–22 (MECPNCHKNASRVIDSRPSDEN) form a disordered region. The segment at 3 to 34 (CPNCHKNASRVIDSRPSDENRAIRRRRECENC) is a zinc-finger region. Positions 49–139 (LLVVKNDGTR…IYRQFKDVSG (91 aa)) constitute an ATP-cone domain.

This sequence belongs to the NrdR family. It depends on Zn(2+) as a cofactor.

In terms of biological role, negatively regulates transcription of bacterial ribonucleotide reductase nrd genes and operons by binding to NrdR-boxes. This chain is Transcriptional repressor NrdR, found in Lactobacillus johnsonii (strain CNCM I-12250 / La1 / NCC 533).